A 96-amino-acid polypeptide reads, in one-letter code: Integration host factor subunit beta (96 aa).

Belongs to the bacterial histone-like protein family. As to quaternary structure, heterodimer of an alpha and a beta chain.

This protein is one of the two subunits of integration host factor, a specific DNA-binding protein that functions in genetic recombination as well as in transcriptional and translational control. The polypeptide is Integration host factor subunit beta (Photobacterium profundum (strain SS9)).